The following is a 496-amino-acid chain: Chaperone SurA (496 aa).

The first 42 residues, 1–42 (MACKSTAVRSATRVAPTRRLGMVTGALVALMAGAALLPAAHA), serve as a signal peptide directing secretion. Residues 53–80 (RGIFTTPDASPSQPLLRGTLPGPSTASG) are disordered. PpiC domains are found at residues 235–337 (VQEY…KLVD) and 349–447 (VAQT…QVEG).

It is found in the periplasm. It carries out the reaction [protein]-peptidylproline (omega=180) = [protein]-peptidylproline (omega=0). Chaperone involved in the correct folding and assembly of outer membrane proteins. Recognizes specific patterns of aromatic residues and the orientation of their side chains, which are found more frequently in integral outer membrane proteins. May act in both early periplasmic and late outer membrane-associated steps of protein maturation. This chain is Chaperone SurA, found in Ralstonia nicotianae (strain ATCC BAA-1114 / GMI1000) (Ralstonia solanacearum).